A 464-amino-acid polypeptide reads, in one-letter code: Soluble pyridine nucleotide transhydrogenase (464 aa).

35–44 (DSRRQVGGNC) lines the FAD pocket.

This sequence belongs to the class-I pyridine nucleotide-disulfide oxidoreductase family. FAD is required as a cofactor.

It is found in the cytoplasm. It carries out the reaction NAD(+) + NADPH = NADH + NADP(+). Functionally, conversion of NADPH, generated by peripheral catabolic pathways, to NADH, which can enter the respiratory chain for energy generation. This Pseudomonas fluorescens (strain ATCC BAA-477 / NRRL B-23932 / Pf-5) protein is Soluble pyridine nucleotide transhydrogenase.